A 103-amino-acid polypeptide reads, in one-letter code: Small ribosomal subunit protein uS10 (103 aa).

It belongs to the universal ribosomal protein uS10 family. Part of the 30S ribosomal subunit.

In terms of biological role, involved in the binding of tRNA to the ribosomes. This Dechloromonas aromatica (strain RCB) protein is Small ribosomal subunit protein uS10.